A 503-amino-acid chain; its full sequence is Aminoaldehyde dehydrogenase 1, peroxisomal (503 aa).

Na(+) is bound by residues Asn27, Ile28, Asp99, and Leu189. 238-245 serves as a coordination point for NAD(+); sequence GSSATGSK. Glu260 acts as the Proton acceptor in catalysis. NAD(+) is bound by residues Cys294 and Glu393. The active-site Nucleophile is Cys294. The short motif at 501-503 is the Microbody targeting signal element; it reads SKL.

This sequence belongs to the aldehyde dehydrogenase family. In terms of assembly, forms homodimers.

The protein resides in the peroxisome. It catalyses the reaction 3-aminopropanal + NAD(+) + H2O = beta-alanine + NADH + 2 H(+). The catalysed reaction is 4-aminobutanal + NAD(+) + H2O = 4-aminobutanoate + NADH + 2 H(+). The enzyme catalyses 4-guanidinobutanal + NAD(+) + H2O = 4-guanidinobutanoate + NADH + 2 H(+). Its pathway is amine and polyamine biosynthesis; betaine biosynthesis via choline pathway; betaine from betaine aldehyde: step 1/1. In terms of biological role, dehydrogenase that catalyzes the oxidation of several aminoaldehydes. Metabolizes and detoxifies aldehyde products of polyamine degradation to non-toxic amino acids. Catalyzes the oxidation of 3-aminopropanal to beta-alanine. Catalyzes the oxidation of 4-aminobutanal to 4-aminobutanoate. Catalyzes the oxidation of 4-guanidinobutanal to 4-guanidinobutanoate. This Pisum sativum (Garden pea) protein is Aminoaldehyde dehydrogenase 1, peroxisomal.